The chain runs to 160 residues: Growth arrest and DNA damage-inducible protein GADD45 beta (160 aa).

The protein belongs to the GADD45 family. As to quaternary structure, interacts with GADD45GIP1.

Its function is as follows. Involved in the regulation of growth and apoptosis. Mediates activation of stress-responsive MTK1/MEKK4 MAPKKK. The protein is Growth arrest and DNA damage-inducible protein GADD45 beta (GADD45B) of Bos taurus (Bovine).